We begin with the raw amino-acid sequence, 338 residues long: Secretory carrier-associated membrane protein 1 (338 aa).

The disordered stretch occupies residues 1–64 (MSDFDSNPFA…NVPNTQPAIM (64 aa)). N-acetylserine is present on Ser2. The residue at position 2 (Ser2) is a Phosphoserine. The Cytoplasmic segment spans residues 2 to 155 (SDFDSNPFAD…QKTVKLMYYL (154 aa)). Thr45 carries the phosphothreonine modification. Residues 156 to 176 (WMFHAVTLFLNIFGCLAWFCV) traverse the membrane as a helical segment. Over 177-181 (DSARA) the chain is Lumenal. A helical transmembrane segment spans residues 182–202 (VDFGLSILWFLLFTPCSFVCW). Residues 203-218 (YRPLYGAFRSDSSFRF) lie on the Cytoplasmic side of the membrane. Residues 219–239 (FVFFFVYICQFAVHVLQAAGF) traverse the membrane as a helical segment. Residues 240–261 (HNWGNCGWISSLTGLNQNIPVG) are Lumenal-facing. Residues 262-282 (IMMIIIAALFTASAVISLVMF) traverse the membrane as a helical segment. Residues 283–338 (KKVHGLYRTTGASFEKAQQEFATGVMSNKTVQTAAANAASTAASSAAQNAFKGNQI) lie on the Cytoplasmic side of the membrane.

The protein belongs to the SCAMP family. Interacts with SYNRG and ITSN1. Interacts with SLC9A7. Widely expressed, with highest expression in brain.

The protein localises to the golgi apparatus. It is found in the trans-Golgi network membrane. The protein resides in the recycling endosome membrane. Functions in post-Golgi recycling pathways. Acts as a recycling carrier to the cell surface. The sequence is that of Secretory carrier-associated membrane protein 1 (SCAMP1) from Homo sapiens (Human).